A 149-amino-acid chain; its full sequence is 3-dehydroquinate dehydratase (149 aa).

Tyr26 (proton acceptor) is an active-site residue. Substrate contacts are provided by Asn77, His83, and Asp90. His103 serves as the catalytic Proton donor. Substrate contacts are provided by residues 104-105 (LS) and Arg114.

Belongs to the type-II 3-dehydroquinase family. In terms of assembly, homododecamer.

The catalysed reaction is 3-dehydroquinate = 3-dehydroshikimate + H2O. The protein operates within metabolic intermediate biosynthesis; chorismate biosynthesis; chorismate from D-erythrose 4-phosphate and phosphoenolpyruvate: step 3/7. Its function is as follows. Catalyzes a trans-dehydration via an enolate intermediate. The chain is 3-dehydroquinate dehydratase from Aliivibrio fischeri (strain MJ11) (Vibrio fischeri).